The sequence spans 303 residues: Methionyl-tRNA formyltransferase (303 aa).

A (6S)-5,6,7,8-tetrahydrofolate-binding site is contributed by 109–112; sequence SLLP.

This sequence belongs to the Fmt family.

It carries out the reaction L-methionyl-tRNA(fMet) + (6R)-10-formyltetrahydrofolate = N-formyl-L-methionyl-tRNA(fMet) + (6S)-5,6,7,8-tetrahydrofolate + H(+). Attaches a formyl group to the free amino group of methionyl-tRNA(fMet). The formyl group appears to play a dual role in the initiator identity of N-formylmethionyl-tRNA by promoting its recognition by IF2 and preventing the misappropriation of this tRNA by the elongation apparatus. This chain is Methionyl-tRNA formyltransferase, found in Helicobacter pylori (strain ATCC 700392 / 26695) (Campylobacter pylori).